Reading from the N-terminus, the 270-residue chain is MTTETRQKRIGIFDSGIGGLTVLRELYRQLPKESILYFADTARLPYGTRTTEEILQFVDEIITWLVKSGVKMVLMACNTSSALALEKVKSKFDVPILGLIVPGANTAVKQGKRIGVIATPATAASNAYRYAILEANASVQVWQVGCPYFVPLIEQNQLHDPYTYQIAEEYLMPLIQQQIDTLVYGCTHYPYLEPILRSLLPKSVIFVDPAVSLVKVVARELKIMNLENDKTPKPTKFVVSSSPQKFADLSLQLLGYKPDVQVISLPAMLK.

Substrate is bound by residues 14–15 and 46–47; these read DS and YG. Residue Cys-77 is the Proton donor/acceptor of the active site. 78-79 is a substrate binding site; the sequence is NT. Cys-186 functions as the Proton donor/acceptor in the catalytic mechanism. Residue 187-188 participates in substrate binding; the sequence is TH.

It belongs to the aspartate/glutamate racemases family.

It catalyses the reaction L-glutamate = D-glutamate. It functions in the pathway cell wall biogenesis; peptidoglycan biosynthesis. Provides the (R)-glutamate required for cell wall biosynthesis. This is Glutamate racemase from Trichodesmium erythraeum (strain IMS101).